Consider the following 303-residue polypeptide: Indole-3-glycerol phosphate synthase (303 aa).

Belongs to the TrpC family.

The catalysed reaction is 1-(2-carboxyphenylamino)-1-deoxy-D-ribulose 5-phosphate + H(+) = (1S,2R)-1-C-(indol-3-yl)glycerol 3-phosphate + CO2 + H2O. Its pathway is amino-acid biosynthesis; L-tryptophan biosynthesis; L-tryptophan from chorismate: step 4/5. This chain is Indole-3-glycerol phosphate synthase, found in Acaryochloris marina (strain MBIC 11017).